Here is a 107-residue protein sequence, read N- to C-terminus: Thiosulfate sulfurtransferase GlpE (107 aa).

The Rhodanese domain maps to 19 to 107 (KDHNARMVDI…WNKAGLPVEK (89 aa)). Catalysis depends on Cys-67, which acts as the Cysteine persulfide intermediate.

The protein belongs to the GlpE family.

The protein localises to the cytoplasm. The enzyme catalyses thiosulfate + hydrogen cyanide = thiocyanate + sulfite + 2 H(+). It catalyses the reaction thiosulfate + [thioredoxin]-dithiol = [thioredoxin]-disulfide + hydrogen sulfide + sulfite + 2 H(+). Functionally, transferase that catalyzes the transfer of sulfur from thiosulfate to thiophilic acceptors such as cyanide or dithiols. May function in a CysM-independent thiosulfate assimilation pathway by catalyzing the conversion of thiosulfate to sulfite, which can then be used for L-cysteine biosynthesis. The chain is Thiosulfate sulfurtransferase GlpE from Aliivibrio salmonicida (strain LFI1238) (Vibrio salmonicida (strain LFI1238)).